The chain runs to 617 residues: Dihydroxy-acid dehydratase (617 aa).

Mg(2+) is bound at residue Asp81. Cys122 serves as a coordination point for [2Fe-2S] cluster. Mg(2+)-binding residues include Asp123 and Lys124. N6-carboxylysine is present on Lys124. Cys195 serves as a coordination point for [2Fe-2S] cluster. Glu491 provides a ligand contact to Mg(2+). Ser517 acts as the Proton acceptor in catalysis.

The protein belongs to the IlvD/Edd family. As to quaternary structure, homodimer. Requires [2Fe-2S] cluster as cofactor. It depends on Mg(2+) as a cofactor.

It catalyses the reaction (2R)-2,3-dihydroxy-3-methylbutanoate = 3-methyl-2-oxobutanoate + H2O. It carries out the reaction (2R,3R)-2,3-dihydroxy-3-methylpentanoate = (S)-3-methyl-2-oxopentanoate + H2O. It participates in amino-acid biosynthesis; L-isoleucine biosynthesis; L-isoleucine from 2-oxobutanoate: step 3/4. Its pathway is amino-acid biosynthesis; L-valine biosynthesis; L-valine from pyruvate: step 3/4. Its function is as follows. Functions in the biosynthesis of branched-chain amino acids. Catalyzes the dehydration of (2R,3R)-2,3-dihydroxy-3-methylpentanoate (2,3-dihydroxy-3-methylvalerate) into 2-oxo-3-methylpentanoate (2-oxo-3-methylvalerate) and of (2R)-2,3-dihydroxy-3-methylbutanoate (2,3-dihydroxyisovalerate) into 2-oxo-3-methylbutanoate (2-oxoisovalerate), the penultimate precursor to L-isoleucine and L-valine, respectively. This is Dihydroxy-acid dehydratase from Buchnera aphidicola subsp. Schizaphis graminum (strain Sg).